The chain runs to 1099 residues: Adenylate-forming reductase Nps11 (1099 aa).

The adenylation (A) domain stretch occupies residues 29 to 360 (AEHNSNVPFF…GTECGGLNSM (332 aa)). AMP contacts are provided by residues His244, 347-348 (NV), Thr352, and 432-435 (LVGR). The Carrier domain occupies 578–664 (WSEESLVVWL…RLSQALARVV (87 aa)). Ser613 is modified (O-(pantetheine 4'-phosphoryl)serine). The segment at 717–952 (LTGSTGGLGS…VVSWLPPHAV (236 aa)) is reductase (R) domain. NADP(+)-binding positions include 721–724 (TGGL), 809–811 (NAW), Tyr883, and Lys887.

It belongs to the adenylate-forming reductase family.

In terms of biological role, adenylate-forming reductase, a natural product biosynthesis enzyme that resembles non-ribosomal peptide synthetases, yet serves to modify one substrate, rather than to condense two or more building blocks. The A-domain preferentially accepts benzoic acid as substrate. The natural product of the enzyme is not yet known. The polypeptide is Adenylate-forming reductase Nps11 (Serpula lacrymans var. lacrymans (strain S7.9) (Dry rot fungus)).